A 166-amino-acid polypeptide reads, in one-letter code: MSEAIIAKKAEQVDLVAEKMKAAASIVVVDSRGLTVGQDTELRRSLRESGVEFKVIKNSILSRAAEQAGLGDMKDLFVGPSAVAFSNEDVVAPAKIINDFAKTADALEIKGGAIEGAASSKEDIQALASLPNREGMLSMLLSVLQAPVRNVAYAVKAVAESKEDVA.

Belongs to the universal ribosomal protein uL10 family. As to quaternary structure, part of the ribosomal stalk of the 50S ribosomal subunit. The N-terminus interacts with L11 and the large rRNA to form the base of the stalk. The C-terminus forms an elongated spine to which L12 dimers bind in a sequential fashion forming a multimeric L10(L12)X complex.

Functionally, forms part of the ribosomal stalk, playing a central role in the interaction of the ribosome with GTP-bound translation factors. This is Large ribosomal subunit protein uL10 from Streptococcus uberis (strain ATCC BAA-854 / 0140J).